A 59-amino-acid chain; its full sequence is UPF0391 membrane protein lpl2443 (59 aa).

Helical transmembrane passes span 5–25 and 30–50; these read ALIF…GIAV and IAKI…IMGL.

It belongs to the UPF0391 family.

The protein resides in the cell membrane. The protein is UPF0391 membrane protein lpl2443 of Legionella pneumophila (strain Lens).